The following is a 339-amino-acid chain: DNA-directed RNA polymerase subunit alpha (339 aa).

The tract at residues 1–233 is alpha N-terminal domain (alpha-NTD); that stretch reads MVREEITGST…DLFLPFLHTE (233 aa). Residues 264–339 are alpha C-terminal domain (alpha-CTD); the sequence is KKGIPLNCIF…IDLPKNKFSL (76 aa).

Belongs to the RNA polymerase alpha chain family. As to quaternary structure, in plastids the minimal PEP RNA polymerase catalytic core is composed of four subunits: alpha, beta, beta', and beta''. When a (nuclear-encoded) sigma factor is associated with the core the holoenzyme is formed, which can initiate transcription.

Its subcellular location is the plastid. It is found in the chloroplast. It carries out the reaction RNA(n) + a ribonucleoside 5'-triphosphate = RNA(n+1) + diphosphate. Functionally, DNA-dependent RNA polymerase catalyzes the transcription of DNA into RNA using the four ribonucleoside triphosphates as substrates. The sequence is that of DNA-directed RNA polymerase subunit alpha from Zea mays (Maize).